A 304-amino-acid chain; its full sequence is Acetaldehyde dehydrogenase 4 (304 aa).

Residue Cys-131 is the Acyl-thioester intermediate of the active site. Residues 162–170 and Asn-273 contribute to the NAD(+) site; that span reads SAGPGTRKN.

It belongs to the acetaldehyde dehydrogenase family.

The enzyme catalyses acetaldehyde + NAD(+) + CoA = acetyl-CoA + NADH + H(+). This chain is Acetaldehyde dehydrogenase 4, found in Dechloromonas aromatica (strain RCB).